Reading from the N-terminus, the 158-residue chain is Transcription elongation factor GreA (158 aa).

It belongs to the GreA/GreB family.

Its function is as follows. Necessary for efficient RNA polymerase transcription elongation past template-encoded arresting sites. The arresting sites in DNA have the property of trapping a certain fraction of elongating RNA polymerases that pass through, resulting in locked ternary complexes. Cleavage of the nascent transcript by cleavage factors such as GreA or GreB allows the resumption of elongation from the new 3'terminus. GreA releases sequences of 2 to 3 nucleotides. The polypeptide is Transcription elongation factor GreA (Zymomonas mobilis subsp. mobilis (strain ATCC 31821 / ZM4 / CP4)).